The sequence spans 170 residues: N-glycosidase R617 (170 aa).

It belongs to the YbiA family.

The enzyme catalyses 2,5-diamino-6-hydroxy-4-(5-phosphoribosylamino)-pyrimidine + H2O = 2,5,6-triamino-4-hydroxypyrimidine + D-ribose 5-phosphate. It carries out the reaction 5-amino-6-(5-phospho-D-ribosylamino)uracil + H2O = 5,6-diaminouracil + D-ribose 5-phosphate. Functionally, catalyzes the hydrolysis of the N-glycosidic bond in the first two intermediates of riboflavin biosynthesis, which are highly reactive metabolites, yielding relatively innocuous products. Thus, can divert a surplus of harmful intermediates into relatively harmless products and pre-empt the damage these intermediates would otherwise do. May act on other substrates in vivo. This Acanthamoeba polyphaga mimivirus (APMV) protein is N-glycosidase R617.